A 167-amino-acid chain; its full sequence is 3-dehydroquinate dehydratase (167 aa).

Tyrosine 22 (proton acceptor) is an active-site residue. Substrate contacts are provided by asparagine 76, histidine 82, and aspartate 89. Histidine 102 serves as the catalytic Proton donor. Residues 103-104 (LT) and arginine 113 contribute to the substrate site.

Belongs to the type-II 3-dehydroquinase family. Homododecamer.

The catalysed reaction is 3-dehydroquinate = 3-dehydroshikimate + H2O. It functions in the pathway metabolic intermediate biosynthesis; chorismate biosynthesis; chorismate from D-erythrose 4-phosphate and phosphoenolpyruvate: step 3/7. Functionally, catalyzes a trans-dehydration via an enolate intermediate. This Helicobacter pylori (strain P12) protein is 3-dehydroquinate dehydratase.